The sequence spans 131 residues: Biogenesis of lysosome-related organelles complex 1 subunit 5 (131 aa).

It belongs to the BLOC1S5 family. Component of the biogenesis of lysosome-related organelles complex-1 (BLOC-1) composed at least of blos-1, blos-2, blos-4, dsbn-1, glo-2, mutd-1 and snpn-1.

Functionally, component of the biogenesis of lysosome-related organelles complex-1 (BLOC-1) involved in gut granule biogenesis. The sequence is that of Biogenesis of lysosome-related organelles complex 1 subunit 5 (mutd-1) from Caenorhabditis elegans.